We begin with the raw amino-acid sequence, 706 residues long: Dual specificity calcium/calmodulin-dependent 3',5'-cyclic nucleotide phosphodiesterase 1C (706 aa).

Methionine 1 is modified (N-acetylmethionine). The calmodulin-binding stretch occupies residues 123-146 (EKPRFKSIVHAVQAGIFVERMYRR). In terms of domain architecture, PDEase spans 151–528 (VGLSYPPAVI…ERWRAKVPKE (378 aa)). The active-site Proton donor is histidine 228. 4 residues coordinate Zn(2+): histidine 232, histidine 268, aspartate 269, and aspartate 376. Aspartate 269 contributes to the Mg(2+) binding site. 2 disordered regions span residues 453 to 497 (LIDE…INNS) and 524 to 655 (KVPK…IKPP). 2 stretches are compositionally biased toward polar residues: residues 456 to 476 (ESSQ…INSS) and 483 to 497 (VKSS…INNS). Composition is skewed to basic and acidic residues over residues 524–554 (KVPK…EAKS), 580–597 (RKGD…KAGE), and 603–630 (DLKD…DGTK). Residues 638 to 647 (APSTSSTSRI) show a composition bias toward polar residues.

Belongs to the cyclic nucleotide phosphodiesterase family. PDE1 subfamily. As to quaternary structure, homodimer. The cofactor is Zn(2+). Mg(2+) is required as a cofactor. Highly expressed in testis and at moderate levels in heart. As to expression, expressed at a moderate level in brain, the cerebellum, testis, heart and olfactory epithelium. In terms of tissue distribution, highly expressed in olfactory epithelium and at very low levels, if any, in other tissues. In the cochlea, expressed in the inner and outer hair cells (at protein level). In the brain, highly expressed in the neurons of the granule layer of the cerebellum, some Purkinje cells, the central amygdaloid nucleus, and the interpolar spinal trigem nucleus and, at moderate levels, in the glomerular and external plexiform layer of the olfactory bulb as well as in parts of the caudate-putamen and olfactory tubercle.

It localises to the lysosome. The enzyme catalyses a nucleoside 3',5'-cyclic phosphate + H2O = a nucleoside 5'-phosphate + H(+). It catalyses the reaction 3',5'-cyclic GMP + H2O = GMP + H(+). It carries out the reaction 3',5'-cyclic AMP + H2O = AMP + H(+). Type I PDE are activated by the binding of calmodulin in the presence of Ca(2+). Different splice variants may have different sensitivities to Ca(2+). Its activity is regulated as follows. Exhibits a higher sensitivity to Ca(2+) stimulation than isoforms 1 and 2. Functionally, calmodulin-dependent cyclic nucleotide phosphodiesterase with a dual specificity for cAMP and cGMP, which are key regulators of many important physiological processes. Exhibits high affinity for both cAMP and cGMP. Modulates the amplitude and duration of the cAMP signal in sensory cilia in response to odorant stimulation, hence contributing to the generation of action potentials. Regulates smooth muscle cell proliferation. Regulates the stability of growth factor receptors, including PDGFRB. The protein is Dual specificity calcium/calmodulin-dependent 3',5'-cyclic nucleotide phosphodiesterase 1C of Mus musculus (Mouse).